The following is a 364-amino-acid chain: Delta(7)-sterol 5(6)-desaturase (364 aa).

3 helical membrane-spanning segments follow: residues 94–114 (FFSL…ITAS), 142–162 (LAVS…MLEL), and 181–201 (KLLI…YLAH). The 125-residue stretch at 188–312 (TFIFFTDCGI…FTTLWDRLGG (125 aa)) folds into the Fatty acid hydroxylase domain. The Histidine box-1 motif lies at 201 to 205 (HRWLH). The short motif at 214-218 (HKPHH) is the Histidine box-2 element. Residues 249 to 269 (ILPLHKISYLILFTFVNFWSV) traverse the membrane as a helical segment. The Histidine box-3 signature appears at 289–293 (HTVHH).

This sequence belongs to the sterol desaturase family. Fe cation is required as a cofactor.

The protein resides in the endoplasmic reticulum membrane. It carries out the reaction a Delta(7)-sterol + 2 Fe(II)-[cytochrome b5] + O2 + 2 H(+) = a Delta(5),Delta(7)-sterol + 2 Fe(III)-[cytochrome b5] + 2 H2O. Its pathway is steroid metabolism; ergosterol biosynthesis; ergosterol from zymosterol: step 3/5. Functionally, catalyzes the introduction of a C-5 double bond in the B ring of ergosterol. May contribute to the regulation of ergosterol biosynthesis. This chain is Delta(7)-sterol 5(6)-desaturase (ERG3), found in Candida glabrata (strain ATCC 2001 / BCRC 20586 / JCM 3761 / NBRC 0622 / NRRL Y-65 / CBS 138) (Yeast).